The following is a 173-amino-acid chain: Lipoprotein signal peptidase (173 aa).

3 helical membrane passes run 12–32 (WLWLAAIMLALDQVTKYWTIQ), 67–87 (WQRYLFTAIAIVVSSYLVYLL), and 102–122 (ALILSGALGNVVDRMMFGYVI). Catalysis depends on residues D123 and D141. A helical transmembrane segment spans residues 137 to 157 (FNIADSAIFTGAVIMIFESFF).

Belongs to the peptidase A8 family.

The protein resides in the cell inner membrane. The enzyme catalyses Release of signal peptides from bacterial membrane prolipoproteins. Hydrolyzes -Xaa-Yaa-Zaa-|-(S,diacylglyceryl)Cys-, in which Xaa is hydrophobic (preferably Leu), and Yaa (Ala or Ser) and Zaa (Gly or Ala) have small, neutral side chains.. The protein operates within protein modification; lipoprotein biosynthesis (signal peptide cleavage). This protein specifically catalyzes the removal of signal peptides from prolipoproteins. The protein is Lipoprotein signal peptidase of Psychromonas ingrahamii (strain DSM 17664 / CCUG 51855 / 37).